Reading from the N-terminus, the 476-residue chain is MEFNFALITTELALFILGLATFVLGLLVPSHSRRGLGSFALLGLLLVLGITIINWSNQGVLLDGMYLVDQYATFFKILCLISAILVVLGSFRYIDKQVGNQFEYYSTVIFTTLGMVVMASAGDFITLYLGLELMTISFVILVAFRSFEAKSLEAGMKYILLAGLSSAVLLYGLSLVYGATGTILIGEVAREIADKGSTPLLIVGVVMLVAGLGFKISAVPFHMWSPDVYEGAPTPVTSFLAVGSKAASFAVLLRLFAGGFGGIQEQWTLLVAVLAALSMLIGNLVAIPQTNIKRMLAYSSIAQAGYIMVGLVSATEAGIKGVMFYAFLYVFATIGAFTVVAIVSNQTNSDEIRDYAGLIQRAPLAASVMLICLLSMAGIPPLAGFVGKFYLFKTVVENHMWLVYLGLIMSMVSVYYYLRVALVMFRDEPKESAPIHVGGAATITLVITMVATIILGIYPGPLAEVANMAAQSFLLK.

The next 14 membrane-spanning stretches (helical) occupy residues 8–28, 35–55, 71–91, 102–122, 124–144, 159–179, 201–221, 239–259, 267–287, 295–315, 322–342, 366–386, 405–425, and 437–457; these read ITTE…GLLV, GLGS…IINW, YATF…LGSF, FEYY…ASAG, FITL…LVAF, ILLA…VYGA, LIVG…AVPF, FLAV…FAGG, WTLL…LVAI, MLAY…VSAT, VMFY…VVAI, ASVM…AGFV, LGLI…LVMF, and VGGA…ILGI.

This sequence belongs to the complex I subunit 2 family. As to quaternary structure, NDH-1 is composed of 14 different subunits. Subunits NuoA, H, J, K, L, M, N constitute the membrane sector of the complex.

The protein resides in the cell membrane. The catalysed reaction is a quinone + NADH + 5 H(+)(in) = a quinol + NAD(+) + 4 H(+)(out). Its function is as follows. NDH-1 shuttles electrons from NADH, via FMN and iron-sulfur (Fe-S) centers, to quinones in the respiratory chain. The immediate electron acceptor for the enzyme in this species is believed to be a menaquinone. Couples the redox reaction to proton translocation (for every two electrons transferred, four hydrogen ions are translocated across the cytoplasmic membrane), and thus conserves the redox energy in a proton gradient. The polypeptide is NADH-quinone oxidoreductase subunit N (Desulforamulus reducens (strain ATCC BAA-1160 / DSM 100696 / MI-1) (Desulfotomaculum reducens)).